Consider the following 1336-residue polypeptide: MIDVNFFDELRIGLATADDIRRWSKGEVKKPETINYRTLKPEKDGLFCERIFGPTRDWECACGKYKRVRYKGIICERCGVEVTKSKVRRERMGHIELAAPVTHIWYFKGVPSRLGYLLDLAPKDLERIIYFAANIITSVDDEARHADQTTLEAEMLLEKKDVEADMESEIAERAAKLEEDLAELEAAGAKADARNKVKKAAEKEMQHIRERAEREIDRLEEIWQTFIKLAPKQMIIDETIYEELVDRYEDYFTGGMGAEAIQTLIRNFDLDSEAEELREIINNGKGQKKMRALKRLKVVAAFQRSGNDPAGMVLDCIPVIPPELRPMVQLDGGRFATSDLNDLYRRVINRNNRLKRMIELGAPEIIVNNEKRMLQESVDALFDNGRRGRPVTGPGNRPLKSLSDLLKGKQGRFRQNLLGKRVDYSGRSVIIVGPQLKLHECGLPKLMALELFKPFVMKRLVENDYAQNIKSAKRMVERQRPEVWDVLEEAISEHPVMLNRAPTLHRLGIQAFEPKLVEGKAIQLHPLACEAFNADFDGDQMAVHLPLSAEAQAEARILMLASNNILSPASGKPLAMPRLDMVTGLYYLTMDKNENEIGGQGAYASATEEGPAQGVYSSYAEAIMARDRGVLGLQAKIKVRISHLRPPVDIEAEQFPEGWNKGDVWLADTTLGRIMFNELLPWNYPYLEGVMVRKGGGTGKIMLGDVINDLAATYPMITVAQTMDKMKDAGFYWATRSGVTITMSDVLVLPNKEEILDRYEAEARKIERKYWEQGALTERERYDRLVELWKDATDEVGNAVEKLYPDDNPIPMIVKSGAAGNMRQIWTLAGMKGMVVNSKGDYITRPIKTSFREGLSVLEYFNNSHGSRKGLADTALRTADSGYLTRRLVDVAQDVIVREDDCGTKQGIRVPVAVEVKDAEGNVTGYTGHSLIETSVAGRVAATAVKDAEGNVMVEPGENLTDQLIDELIAAGVKEVKVRSVLTCQTPTGVCAKCYGKSMATGKLVDIGEAVGIVAAQSIGEPGTQLTMRTFHQGGVGGDITGGLPRVQELFEARVPKNRAPIASVAGTVHLDDEGNFYTLTINPDDGSDVVVYEKLSKRQGLATVRVPMESNPGAMIERTLAEGDHVEVGDRLLRGPADPHDVLEVLGRRGVEQHLVDEVQDVYRAQGVAIHDKHIEIIIRQMLRRGTVIESGSTEFLPGTLVDLSEAKAANAEALANGGQPAELRSEIMGITKASLATESWLSAASFQETTRVLTDAAINKRSDKLIGLKENVIIGKLIPAGTGISRYRNISVKPTEAARNAAYSIPTYGDSIYGDDGYGEFTGASVPLDEAYDL.

Zn(2+) contacts are provided by C60, C62, C75, and C78. D535, D537, and D539 together coordinate Mg(2+). C902, C984, C991, and C994 together coordinate Zn(2+).

It belongs to the RNA polymerase beta' chain family. The RNAP catalytic core consists of 2 alpha, 1 beta, 1 beta' and 1 omega subunit. When a sigma factor is associated with the core the holoenzyme is formed, which can initiate transcription. Mg(2+) serves as cofactor. It depends on Zn(2+) as a cofactor.

The catalysed reaction is RNA(n) + a ribonucleoside 5'-triphosphate = RNA(n+1) + diphosphate. DNA-dependent RNA polymerase catalyzes the transcription of DNA into RNA using the four ribonucleoside triphosphates as substrates. This is DNA-directed RNA polymerase subunit beta' from Corynebacterium diphtheriae (strain ATCC 700971 / NCTC 13129 / Biotype gravis).